The sequence spans 411 residues: Heterogeneous nuclear ribonucleoprotein 1 (411 aa).

One can recognise an RRM 1 domain in the interval 6–82 (GKLFVGGISW…REVDVKRAMS (77 aa)). 3 disordered regions span residues 81–103 (MSRE…SSGG), 183–221 (KRAL…DGRM), and 358–411 (AAYG…RQGQ). A compositionally biased stretch (polar residues) spans 87 to 101 (QVSGRTGNLNTSRSS). The 78-residue stretch at 110-187 (KKIFVGGLPP…KQVEVKRALP (78 aa)) folds into the RRM 2 domain. 3 stretches are compositionally biased toward gly residues: residues 192-212 (PGGG…GYGG), 362-387 (VVGG…GYGD), and 397-411 (GYGG…RQGQ). The tract at residues 341-390 (GYGYGGYSGSDSGYGNQAAYGVVGGRPSGGGSNNPGSGGYMGGGYGDGSW) is nuclear targeting sequence (M9).

In terms of assembly, component of the spliceosome. Interacts with TRN1.

The protein localises to the nucleus. The protein resides in the cytoplasm. Involved with pre-mRNA processing. Forms complexes (ribonucleosomes) with at least 20 other different hnRNP and heterogeneous nuclear RNA in the nucleus. Functionally, involved in the packaging of pre-mRNA into hnRNP particles, transport of poly(A) mRNA from the nucleus to the cytoplasm and may modulate splice site selection. This is Heterogeneous nuclear ribonucleoprotein 1 (RNP1) from Arabidopsis thaliana (Mouse-ear cress).